The chain runs to 85 residues: MQTVIFGRSGCPYCVRAKDLAEKLSNERDDFQYQYVDIRAEGITKEDLQQKAGKPVETVPQIFVDQQHIGGYTDFAAWVKENLDA.

The region spanning 1 to 85 (MQTVIFGRSG…AAWVKENLDA (85 aa)) is the Glutaredoxin domain. The cysteines at positions 11 and 14 are disulfide-linked.

The protein belongs to the glutaredoxin family. Monomer.

In terms of biological role, the disulfide bond functions as an electron carrier in the glutathione-dependent synthesis of deoxyribonucleotides by the enzyme ribonucleotide reductase. In addition, it is also involved in reducing some disulfides in a coupled system with glutathione reductase. This is Glutaredoxin 1 (grxA) from Shigella flexneri.